We begin with the raw amino-acid sequence, 163 residues long: Neurotrophin-3 (163 aa).

The N-terminal stretch at 1–3 (IQS) is a signal peptide. Positions 4–119 (TSMDQGILTE…VLNRTSRRKR (116 aa)) are excised as a propeptide. The disordered stretch occupies residues 35-61 (KQTARTKDGTQTTVKKSEAEADATASQ). N-linked (GlcNAc...) asparagine glycosylation occurs at Asn-112.

The protein belongs to the NGF-beta family.

It localises to the secreted. Its function is as follows. Seems to promote the survival of visceral and proprioceptive sensory neurons. The sequence is that of Neurotrophin-3 (NTF3) from Corallus caninus (Emerald tree boa).